We begin with the raw amino-acid sequence, 427 residues long: Anaerobic glycerol-3-phosphate dehydrogenase subunit B (427 aa).

The protein belongs to the anaerobic G-3-P dehydrogenase subunit B family. Composed of a catalytic GlpA/B dimer and of membrane bound GlpC. FMN is required as a cofactor.

It catalyses the reaction a quinone + sn-glycerol 3-phosphate = dihydroxyacetone phosphate + a quinol. The protein operates within polyol metabolism; glycerol degradation via glycerol kinase pathway; glycerone phosphate from sn-glycerol 3-phosphate (anaerobic route): step 1/1. Its function is as follows. Conversion of glycerol 3-phosphate to dihydroxyacetone. Uses fumarate or nitrate as electron acceptor. In Glaesserella parasuis serovar 5 (strain SH0165) (Haemophilus parasuis), this protein is Anaerobic glycerol-3-phosphate dehydrogenase subunit B.